A 320-amino-acid polypeptide reads, in one-letter code: Serpentine receptor class gamma-17 (320 aa).

6 helical membrane passes run 25–45 (AIYF…ISLL), 80–100 (IFFG…STFF), 155–175 (FIML…QVIA), 192–212 (WASL…FTIV), 237–257 (FTSI…LTFA), and 268–288 (YILQ…IMFL).

This sequence belongs to the nematode receptor-like protein srg family.

Its subcellular location is the membrane. The chain is Serpentine receptor class gamma-17 (srg-17) from Caenorhabditis elegans.